Reading from the N-terminus, the 1181-residue chain is HEAT repeat-containing protein 6 (1181 aa).

One copy of the HEAT 1 repeat lies at P159–G198. 2 disordered regions span residues Q292–G347 and L371–S390. The span at K300–T312 shows a compositional bias: polar residues. Residues L313 to K325 are compositionally biased toward basic residues. 2 positions are modified to phosphoserine: S336 and S337. A phosphoserine mark is found at S399 and S402. HEAT repeat units lie at residues E452–Q490, S515–Y552, and S558–P595. Residues N613 to G646 are disordered. Residue T618 is modified to Phosphothreonine. Over residues E637–G646 the composition is skewed to polar residues. Residue S643 is modified to Phosphoserine.

As to expression, amplified in breast cancer cell lines MCF-7 and BT-474.

Amplification-dependent oncogene. This chain is HEAT repeat-containing protein 6 (HEATR6), found in Homo sapiens (Human).